A 301-amino-acid chain; its full sequence is Immune-associated nucleotide-binding protein 5 (301 aa).

The 204-residue stretch at 11 to 214 (EPVRNIVLVG…FTEENDLNEK (204 aa)) folds into the AIG1-type G domain. The G1 stretch occupies residues 20-27 (GPTGNGKS). 20–28 (GPTGNGKSS) contacts GTP. Residues 46 to 50 (CKTCK) are G2. The G3 stretch occupies residues 63–66 (DTPG). Residues 133–136 (TGGD) are G4. Residues 172–174 (NNK) form a G5 region. N173 contacts GTP.

The protein belongs to the TRAFAC class TrmE-Era-EngA-EngB-Septin-like GTPase superfamily. AIG1/Toc34/Toc159-like paraseptin GTPase family. IAN subfamily. In terms of tissue distribution, expressed in pollen, cotyledons and lateral roots.

The polypeptide is Immune-associated nucleotide-binding protein 5 (Arabidopsis thaliana (Mouse-ear cress)).